The following is a 452-amino-acid chain: tRNA modification GTPase MnmE (452 aa).

(6S)-5-formyl-5,6,7,8-tetrahydrofolate is bound by residues R21, E82, and R121. Positions 217–373 (GINTTIIGKP…LENKIIEMFN (157 aa)) constitute a TrmE-type G domain. Residue N227 participates in K(+) binding. GTP contacts are provided by residues 227 to 232 (NVGKSS), 246 to 252 (TDIPGTT), and 271 to 274 (DTAG). Residue S231 coordinates Mg(2+). Positions 246, 248, and 251 each coordinate K(+). T252 provides a ligand contact to Mg(2+). K452 lines the (6S)-5-formyl-5,6,7,8-tetrahydrofolate pocket.

This sequence belongs to the TRAFAC class TrmE-Era-EngA-EngB-Septin-like GTPase superfamily. TrmE GTPase family. In terms of assembly, homodimer. Heterotetramer of two MnmE and two MnmG subunits. Requires K(+) as cofactor.

Its subcellular location is the cytoplasm. In terms of biological role, exhibits a very high intrinsic GTPase hydrolysis rate. Involved in the addition of a carboxymethylaminomethyl (cmnm) group at the wobble position (U34) of certain tRNAs, forming tRNA-cmnm(5)s(2)U34. This Finegoldia magna (strain ATCC 29328 / DSM 20472 / WAL 2508) (Peptostreptococcus magnus) protein is tRNA modification GTPase MnmE.